The following is a 669-amino-acid chain: UvrABC system protein B (669 aa).

The Helicase ATP-binding domain maps to 26–183 (TNFHAGIAKQ…RHLTELQYTR (158 aa)). Residue 39–46 (GVTGSGKT) coordinates ATP. A Beta-hairpin motif is present at residues 92 to 115 (YYDYYQPEAYVPASDTFIEKDSSI). Residues 431–597 (QVDDLISQIN…SVVRPISDIL (167 aa)) enclose the Helicase C-terminal domain. A UVR domain is found at 631-666 (AAQMKMLEQQMYQHARDLEFEDAARIRDQIQRLREA).

It belongs to the UvrB family. Forms a heterotetramer with UvrA during the search for lesions. Interacts with UvrC in an incision complex.

It is found in the cytoplasm. Its function is as follows. The UvrABC repair system catalyzes the recognition and processing of DNA lesions. A damage recognition complex composed of 2 UvrA and 2 UvrB subunits scans DNA for abnormalities. Upon binding of the UvrA(2)B(2) complex to a putative damaged site, the DNA wraps around one UvrB monomer. DNA wrap is dependent on ATP binding by UvrB and probably causes local melting of the DNA helix, facilitating insertion of UvrB beta-hairpin between the DNA strands. Then UvrB probes one DNA strand for the presence of a lesion. If a lesion is found the UvrA subunits dissociate and the UvrB-DNA preincision complex is formed. This complex is subsequently bound by UvrC and the second UvrB is released. If no lesion is found, the DNA wraps around the other UvrB subunit that will check the other stand for damage. The chain is UvrABC system protein B from Xylella fastidiosa (strain M12).